Consider the following 197-residue polypeptide: Phosphoheptose isomerase (197 aa).

The SIS domain occupies 40–197; the sequence is CIASIAQGGK…LVEHSIFGKQ (158 aa). 55–57 lines the substrate pocket; it reads NGG. Zn(2+) contacts are provided by His64 and Glu68. Residues Glu68, 97–98, 123–125, Ser128, and Gln175 each bind substrate; these read ND and STS. 2 residues coordinate Zn(2+): Gln175 and His183.

The protein belongs to the SIS family. GmhA subfamily. In terms of assembly, homotetramer. Zn(2+) is required as a cofactor.

It is found in the cytoplasm. The enzyme catalyses 2 D-sedoheptulose 7-phosphate = D-glycero-alpha-D-manno-heptose 7-phosphate + D-glycero-beta-D-manno-heptose 7-phosphate. It participates in carbohydrate biosynthesis; D-glycero-D-manno-heptose 7-phosphate biosynthesis; D-glycero-alpha-D-manno-heptose 7-phosphate and D-glycero-beta-D-manno-heptose 7-phosphate from sedoheptulose 7-phosphate: step 1/1. It functions in the pathway capsule biogenesis; capsule polysaccharide biosynthesis. Functionally, catalyzes the isomerization of sedoheptulose 7-phosphate in D-glycero-D-manno-heptose 7-phosphate. This Burkholderia pseudomallei (strain K96243) protein is Phosphoheptose isomerase (gmhA).